The sequence spans 301 residues: MKTKAGFVALIGKPNAGKSTLLNTLLNAHLALVSHKANATRKLMKCIVPFKDKEGYESQIIFLDTPGLHHQEKLLNQCMLSQALKAMGDAELCVFLASVHDDLKGYEEFLNLCQKPHILALSKIDTATHKQVLQKLQEYQKYSSQFLDLVPLSAKKSQNLNTLLECISKYLSPSAWLFEKDLMSDEKMRDIYKEIIRESLFDFLSDEIPYESDVMIDKFIEEERIDKVYAHIIVEKESQKKIVIGKNGVNIKRIGTNARLKMQEVGEKKVFLNLQVIAQKSWSKEEKSLQKLGYIHQRKRD.

Residues 4–173 (KAGFVALIGK…LECISKYLSP (170 aa)) form the Era-type G domain. Residues 12–19 (GKPNAGKS) form a G1 region. 12 to 19 (GKPNAGKS) lines the GTP pocket. Residues 38 to 42 (NATRK) are G2. A G3 region spans residues 64-67 (DTPG). Residues 64–68 (DTPGL) and 122–125 (SKID) contribute to the GTP site. The G4 stretch occupies residues 122-125 (SKID). Positions 152–154 (LSA) are G5. The KH type-2 domain occupies 204-280 (LSDEIPYESD…FLNLQVIAQK (77 aa)).

The protein belongs to the TRAFAC class TrmE-Era-EngA-EngB-Septin-like GTPase superfamily. Era GTPase family. As to quaternary structure, monomer.

It is found in the cytoplasm. Its subcellular location is the cell inner membrane. Its function is as follows. An essential GTPase that binds both GDP and GTP, with rapid nucleotide exchange. Plays a role in 16S rRNA processing and 30S ribosomal subunit biogenesis and possibly also in cell cycle regulation and energy metabolism. This chain is GTPase Era, found in Helicobacter pylori (strain G27).